The primary structure comprises 424 residues: Piriformospora indica-insensitive protein 2 (424 aa).

The signal sequence occupies residues 1 to 21 (MLWQTFFSSLLLLSLLFGCNG). 10 LRR repeats span residues 141-166 (ASNL…IGNL), 167-190 (TKLK…ICNL), 191-213 (KRLK…CFKG), 214-237 (LKEL…SFGD), 238-263 (LVSL…GFLK), 265-286 (LTLL…IENI), 287-311 (QSLT…NWGK), 312-336 (MSNL…LTNL), 337-360 (KRLR…KLEA), and 362-387 (PCLG…FYEK).

Its subcellular location is the cell membrane. Required for growth promotion and enhanced seed production mediated by the endophytic fungus Piriformospora indica. The chain is Piriformospora indica-insensitive protein 2 (PII-2) from Arabidopsis thaliana (Mouse-ear cress).